The primary structure comprises 409 residues: NDP-glycosyltransferase ltbB (409 aa).

N-linked (GlcNAc...) asparagine glycosylation occurs at Asn-36. Residues 319–339 (IWAFAYVWAWLQTLYTAPWIA) form a helical membrane-spanning segment.

This sequence belongs to the GT2 glycosyltransferase family.

It localises to the membrane. The protein operates within secondary metabolite biosynthesis. NDP-glycosyltransferase; part of the gene cluster that mediates the biosynthesis of luteodienoside A, a glycosylated polyketide consisting of an unusual 1-O-beta-D-glucopyranosyl-myo-inositol (glucinol) ester of 3-hydroxy-2,2,4-trimethylocta-4,6-dienoic acid. LtbB likely serves as a glucinol synthase by transferring D-glucose to myo-inositol using NDP-glucose as a substrate. The ltbA carnitine O-acyltransferase (cAT) domain uses glucinol produced by the glycosyltransferase ltbB as an offloading substrate to release luteodienoside A from the HR-PKS. Since ltbA and ltbB are sufficient for the biosynthesis of luteodienoside A, the functions of the methyltransferase ltbC and the FAD-binding monooxygenase ltbD within the pathway remain obscur. The protein is NDP-glycosyltransferase ltbB of Aspergillus luteorubrus.